The primary structure comprises 865 residues: Protein translocase subunit SecA (865 aa).

ATP-binding positions include Gln93, 111 to 115 (GEGKT), and Asp501. Zn(2+) contacts are provided by Cys841, Cys843, Cys852, and Cys853.

This sequence belongs to the SecA family. Monomer and homodimer. Part of the essential Sec protein translocation apparatus which comprises SecA, SecYEG and auxiliary proteins SecDF-YajC and YidC. Requires Zn(2+) as cofactor.

It is found in the cell inner membrane. The protein resides in the cytoplasm. It carries out the reaction ATP + H2O + cellular proteinSide 1 = ADP + phosphate + cellular proteinSide 2.. Functionally, part of the Sec protein translocase complex. Interacts with the SecYEG preprotein conducting channel. Has a central role in coupling the hydrolysis of ATP to the transfer of proteins into and across the cell membrane, serving as an ATP-driven molecular motor driving the stepwise translocation of polypeptide chains across the membrane. This chain is Protein translocase subunit SecA, found in Helicobacter pylori (strain HPAG1).